Consider the following 85-residue polypeptide: Alpha-toxin Ac2 (85 aa).

The first 19 residues, 1 to 19 (MNYLVMISLALLFMTGVES), serve as a signal peptide directing secretion. Residues 21 to 83 (KDGYIVDDRN…VRTKGPGRCK (63 aa)) form the LCN-type CS-alpha/beta domain. Cystine bridges form between cysteine 31-cysteine 82, cysteine 35-cysteine 55, cysteine 41-cysteine 65, and cysteine 45-cysteine 67. Lysine 83 is modified (lysine amide).

This sequence belongs to the long (4 C-C) scorpion toxin superfamily. Sodium channel inhibitor family. Alpha subfamily. Expressed by the venom gland.

It is found in the secreted. Its function is as follows. Alpha toxins bind voltage-independently at site-3 of sodium channels (Nav) and inhibit the inactivation of the activated channels, thereby blocking neuronal transmission. The polypeptide is Alpha-toxin Ac2 (Androctonus crassicauda (Arabian fat-tailed scorpion)).